The sequence spans 204 residues: MEKTKLKIILLGDSGVGKTSLLKRYNDKDFKQLHNSTIYVDLVTKEICIAERQVILQIWDTAGQERFKSLPSRFYRDTDCCVLVYDVNTLKTFESIDNWHDEFIKQANPETPTKFPFVLMGNKTDVNNGKPRVVAKEIADQWCGSKGNIVYFETSAKAKINVEEAFLEIAKKALTNERQIDDMERYRSVVPTIEKETPRSRCSC.

12–19 (GDSGVGKT) contributes to the GTP binding site. The Effector region signature appears at 34 to 42 (HNSTIYVDL). GTP contacts are provided by residues 60–64 (DTAGQ), 122–125 (NKTD), and 155–156 (SA). Residues Cys-202 and Cys-204 are each lipidated (S-geranylgeranyl cysteine). The residue at position 204 (Cys-204) is a Cysteine methyl ester.

Belongs to the small GTPase superfamily. Rab family.

It is found in the cell membrane. Functionally, intracellular vesicle trafficking and protein transport. The polypeptide is Ras-related protein RABG1 (RABG1) (Arabidopsis thaliana (Mouse-ear cress)).